Here is a 722-residue protein sequence, read N- to C-terminus: Biotin--protein ligase (722 aa).

A disordered region spans residues 27–93 (KELGKASDKQ…EPAADGDPGL (67 aa)). A compositionally biased stretch (low complexity) spans 46–55 (ASPEAQPAQG). Ser-295 carries the phosphoserine modification. Residues 459–648 (TRLGKVILFA…VLEKLIDRFQ (190 aa)) form the BPL/LPL catalytic domain.

The protein belongs to the biotin--protein ligase family. Monomer.

It localises to the cytoplasm. Its subcellular location is the mitochondrion. It carries out the reaction apo-[methylmalonyl-CoA:pyruvate carboxytransferase] + biotin + ATP = holo-[methylmalonyl-CoA:pyruvate carboxytransferase] + AMP + diphosphate + H(+). It catalyses the reaction apo-[propionyl-CoA:carbon-dioxide ligase (ADP-forming)] + biotin + ATP = holo-[propionyl-CoA:carbon-dioxide ligase (ADP-forming)] + AMP + diphosphate + H(+). The catalysed reaction is apo-[3-methylcrotonoyl-CoA:carbon-dioxide ligase (ADP-forming)] + biotin + ATP = holo-[3-methylcrotonoyl-CoA:carbon-dioxide ligase (ADP-forming)] + AMP + diphosphate + H(+). The enzyme catalyses biotin + L-lysyl-[protein] + ATP = N(6)-biotinyl-L-lysyl-[protein] + AMP + diphosphate + H(+). Its function is as follows. Biotin--protein ligase catalyzing the biotinylation of the 4 biotin-dependent carboxylases acetyl-CoA-carboxylase, pyruvate carboxylase, propionyl-CoA carboxylase, and methylcrotonyl-CoA carboxylase. In Mus musculus (Mouse), this protein is Biotin--protein ligase.